The chain runs to 192 residues: Thymidine kinase (192 aa).

ATP-binding positions include 9-16 (SSMNAGKS) and 87-90 (DEAQ). The active-site Proton acceptor is the E88. Residues C145, C147, C182, and H185 each coordinate Zn(2+).

Belongs to the thymidine kinase family. In terms of assembly, homotetramer.

It localises to the cytoplasm. The catalysed reaction is thymidine + ATP = dTMP + ADP + H(+). This Colwellia psychrerythraea (strain 34H / ATCC BAA-681) (Vibrio psychroerythus) protein is Thymidine kinase.